The chain runs to 241 residues: Translation initiation factor IF-3 (241 aa).

A disordered region spans residues 178 to 241 (KKTEAMAEAR…EAPAEASTEA (64 aa)). A compositionally biased stretch (basic and acidic residues) spans 180–197 (TEAMAEAREAQAARKAEA). Residues 208–229 (ADEDIPEGELPEGEVPEAETTE) are compositionally biased toward acidic residues. The segment covering 230–241 (AAEAPAEASTEA) has biased composition (low complexity).

It belongs to the IF-3 family. As to quaternary structure, monomer.

The protein resides in the cytoplasm. Functionally, IF-3 binds to the 30S ribosomal subunit and shifts the equilibrium between 70S ribosomes and their 50S and 30S subunits in favor of the free subunits, thus enhancing the availability of 30S subunits on which protein synthesis initiation begins. This is Translation initiation factor IF-3 from Streptomyces avermitilis (strain ATCC 31267 / DSM 46492 / JCM 5070 / NBRC 14893 / NCIMB 12804 / NRRL 8165 / MA-4680).